Here is a 475-residue protein sequence, read N- to C-terminus: Putative aldehyde dehydrogenase SH0913 (475 aa).

Residue 201-207 (GDGEGVG) coordinates NAD(+). Active-site residues include glutamate 245 and cysteine 279.

This sequence belongs to the aldehyde dehydrogenase family.

The catalysed reaction is an aldehyde + NAD(+) + H2O = a carboxylate + NADH + 2 H(+). The protein is Putative aldehyde dehydrogenase SH0913 of Staphylococcus haemolyticus (strain JCSC1435).